The following is a 510-amino-acid chain: Histidine ammonia-lyase (510 aa).

A cross-link (5-imidazolinone (Ala-Gly)) is located at residues 143–145; the sequence is ASG. 2,3-didehydroalanine (Ser) is present on Ser-144.

This sequence belongs to the PAL/histidase family. Post-translationally, contains an active site 4-methylidene-imidazol-5-one (MIO), which is formed autocatalytically by cyclization and dehydration of residues Ala-Ser-Gly.

It is found in the cytoplasm. It carries out the reaction L-histidine = trans-urocanate + NH4(+). Its pathway is amino-acid degradation; L-histidine degradation into L-glutamate; N-formimidoyl-L-glutamate from L-histidine: step 1/3. The sequence is that of Histidine ammonia-lyase from Shewanella pealeana (strain ATCC 700345 / ANG-SQ1).